Reading from the N-terminus, the 212-residue chain is Uridine kinase (212 aa).

Position 13–20 (13–20 (GGSGSGKT)) interacts with ATP.

The protein belongs to the uridine kinase family.

It is found in the cytoplasm. It carries out the reaction uridine + ATP = UMP + ADP + H(+). The catalysed reaction is cytidine + ATP = CMP + ADP + H(+). It functions in the pathway pyrimidine metabolism; CTP biosynthesis via salvage pathway; CTP from cytidine: step 1/3. The protein operates within pyrimidine metabolism; UMP biosynthesis via salvage pathway; UMP from uridine: step 1/1. In Bacillus cereus (strain B4264), this protein is Uridine kinase.